We begin with the raw amino-acid sequence, 722 residues long: Inactive serine protease PAMR1 (722 aa).

The first 21 residues, 1-21, serve as a signal peptide directing secretion; that stretch reads MALLVWSSLVVASLHLLGTAA. N-linked (GlcNAc...) asparagine glycosylation is present at Asn98. Disulfide bonds link Cys130/Cys152, Cys179/Cys201, Cys241/Cys252, Cys246/Cys262, Cys264/Cys273, Cys282/Cys331, Cys317/Cys344, and Cys416/Cys444. The region spanning 130–238 is the CUB domain; it reads CGEVIQAARG…DGFYVTFEEV (109 aa). The EGF-like domain occupies 237 to 274; the sequence is EVTGCSSTPCFHDGTCIADKTGSYRCACLAGYTGRHCE. Sushi domains are found at residues 280–346 and 393–446; these read KSCK…VCIK and KPAL…SCIP. Asn318 carries an N-linked (GlcNAc...) asparagine glycan. The 276-residue stretch at 447–722 folds into the Peptidase S1 domain; that stretch reads ICGKLENFNI…FKEWLEKNMK (276 aa). N-linked (GlcNAc...) asparagine glycosylation occurs at Asn455. A disulfide bridge connects residues Cys491 and Cys507. Asn616 is a glycosylation site (N-linked (GlcNAc...) asparagine). Intrachain disulfides connect Cys632-Cys651 and Cys663-Cys699.

It belongs to the peptidase S1 family.

The protein resides in the secreted. Functionally, may play a role in regeneration of skeletal muscle. In Xenopus tropicalis (Western clawed frog), this protein is Inactive serine protease PAMR1 (pamr1).